An 870-amino-acid chain; its full sequence is Endoribonuclease YSH1 (870 aa).

Residues His159, His161, Asp163, His164, His256, and Asp277 each contribute to the Zn(2+) site. Catalysis depends on His499, which acts as the Proton donor. Residue His521 coordinates Zn(2+). The tract at residues 598 to 627 (ITELTEEKEEADEIKEDNGETDTTQKPNES) is disordered. Acidic residues predominate over residues 601 to 612 (LTEEKEEADEIK). The segment covering 618 to 627 (TDTTQKPNES) has biased composition (polar residues).

This sequence belongs to the metallo-beta-lactamase superfamily. RNA-metabolizing metallo-beta-lactamase-like family. CPSF2/YSH1 subfamily.

The protein resides in the nucleus. Component of the cleavage factor I (CF I) involved in pre-mRNA 3'-end processing. The protein is Endoribonuclease YSH1 (YSH1) of Candida albicans (strain SC5314 / ATCC MYA-2876) (Yeast).